We begin with the raw amino-acid sequence, 551 residues long: MPLSTAGILSSSSAASNRSRNKARYRTKAVSSEVDESLFGDIKSPAQGQSDSPIVLLRDKHTLQKTLTALGLDRKPETIQLITRDMVRELIVPTEDPSGESLIISPEEFERIKWASHVLTREELEARDQAFKKEKEATMDAVMTRKKIMKQKEMVWNNNKKLSDLEEVAKERAQNLLQRANKLRMEQEEELKDMSKIILNAKCHAIRDAQILEKQQIQKELDTEEKRLDQMMEVERQKSIQRQEELERKRREERIRGRRQIVEQMEKNQEERSLLAEQREQEKEQMLEYMEQLQEEDLKDMERRQQQKLKMQAEIKRINDENQKQKAELLAQEKLADQMVMEFTKKKMAREAEFEAEQERIRREKEKEIARLRAMQEKAQDYQAEQDALRAKRNQEVADREWRRKEKENARKKMETEAELRKSRLEQVAFKEHALAVQVQRDRDEFERILRAQREQIEKERLEEEKKATGRLQHANELRRQVRENQQKEVQNRIATFEEGRRLKEEAQKRRERIDEIKRKKLEELRATGLPEKYCIEAERKANILPATSVN.

Disordered regions lie at residues 1-30 (MPLSTAGILSSSSAASNRSRNKARYRTKAV) and 461-489 (RLEEEKKATGRLQHANELRRQVRENQQKE). Residues 157–526 (NNNKKLSDLE…IKRKKLEELR (370 aa)) are a coiled coil.

The protein belongs to the CFAP45 family. In terms of assembly, microtubule inner protein component of sperm flagellar doublet microtubules. Interacts with AK8; dimerization with AK8 may create a cavity at the interface of the dimer that can accommodate AMP. Interacts with CFAP52. Interacts with ENKUR. Directly interacts with DNALI1. Interacts with DNAH11. Interacts with DNAI1. In terms of tissue distribution, expressed in respiratory cells and in sperm (at protein level). Expressed in nasopharyngeal epithelium and trachea.

The protein resides in the cytoplasm. The protein localises to the cytoskeleton. Its subcellular location is the cilium axoneme. It localises to the flagellum axoneme. It is found in the cell projection. The protein resides in the cilium. The protein localises to the flagellum. In terms of biological role, microtubule inner protein (MIP) part of the dynein-decorated doublet microtubules (DMTs) in cilia axoneme, which is required for motile cilia beating. It is an AMP-binding protein that may facilitate dynein ATPase-dependent ciliary and flagellar beating via adenine nucleotide homeostasis. May function as a donor of AMP to AK8 and hence promote ADP production. The polypeptide is Cilia- and flagella-associated protein 45 (Homo sapiens (Human)).